A 466-amino-acid polypeptide reads, in one-letter code: Ribulose bisphosphate carboxylase large chain (466 aa).

Position 5 is an N6,N6,N6-trimethyllysine (lysine 5). Substrate is bound by residues asparagine 114 and threonine 164. Catalysis depends on lysine 166, which acts as the Proton acceptor. Lysine 168 lines the substrate pocket. Positions 192, 194, and 195 each coordinate Mg(2+). Lysine 192 carries the N6-carboxylysine modification. Histidine 285 (proton acceptor) is an active-site residue. Residues arginine 286, histidine 318, and serine 370 each contribute to the substrate site.

Belongs to the RuBisCO large chain family. Type I subfamily. As to quaternary structure, heterohexadecamer of 8 large chains and 8 small chains; disulfide-linked. The disulfide link is formed within the large subunit homodimers. Requires Mg(2+) as cofactor. In terms of processing, the disulfide bond which can form in the large chain dimeric partners within the hexadecamer appears to be associated with oxidative stress and protein turnover.

It is found in the plastid. It localises to the chloroplast. The enzyme catalyses 2 (2R)-3-phosphoglycerate + 2 H(+) = D-ribulose 1,5-bisphosphate + CO2 + H2O. The catalysed reaction is D-ribulose 1,5-bisphosphate + O2 = 2-phosphoglycolate + (2R)-3-phosphoglycerate + 2 H(+). Functionally, ruBisCO catalyzes two reactions: the carboxylation of D-ribulose 1,5-bisphosphate, the primary event in carbon dioxide fixation, as well as the oxidative fragmentation of the pentose substrate in the photorespiration process. Both reactions occur simultaneously and in competition at the same active site. This is Ribulose bisphosphate carboxylase large chain from Berzelia lanuginosa (Buttonbush).